The sequence spans 506 residues: Kynurenine 3-monooxygenase (506 aa).

The segment at 153-175 is disordered; it reads QETSLLPGEESEKDKKQNTEDED. Basic and acidic residues predominate over residues 162 to 171; the sequence is ESEKDKKQNT.

The protein belongs to the aromatic-ring hydroxylase family. KMO subfamily. FAD serves as cofactor.

Its subcellular location is the mitochondrion outer membrane. It catalyses the reaction L-kynurenine + NADPH + O2 + H(+) = 3-hydroxy-L-kynurenine + NADP(+) + H2O. Its pathway is cofactor biosynthesis; NAD(+) biosynthesis; quinolinate from L-kynurenine: step 1/3. Its function is as follows. Catalyzes the hydroxylation of L-kynurenine (L-Kyn) to form 3-hydroxy-L-kynurenine (L-3OHKyn). Required for synthesis of quinolinic acid. In Cryptococcus neoformans var. neoformans serotype D (strain B-3501A) (Filobasidiella neoformans), this protein is Kynurenine 3-monooxygenase.